Reading from the N-terminus, the 207-residue chain is Uridine kinase (207 aa).

Residue 11 to 18 participates in ATP binding; sequence GGSGSGKT.

This sequence belongs to the uridine kinase family.

Its subcellular location is the cytoplasm. It carries out the reaction uridine + ATP = UMP + ADP + H(+). The enzyme catalyses cytidine + ATP = CMP + ADP + H(+). It participates in pyrimidine metabolism; CTP biosynthesis via salvage pathway; CTP from cytidine: step 1/3. Its pathway is pyrimidine metabolism; UMP biosynthesis via salvage pathway; UMP from uridine: step 1/1. The sequence is that of Uridine kinase from Staphylococcus epidermidis (strain ATCC 35984 / DSM 28319 / BCRC 17069 / CCUG 31568 / BM 3577 / RP62A).